The chain runs to 197 residues: Probable nicotinate-nucleotide adenylyltransferase (197 aa).

This sequence belongs to the NadD family.

It catalyses the reaction nicotinate beta-D-ribonucleotide + ATP + H(+) = deamido-NAD(+) + diphosphate. Its pathway is cofactor biosynthesis; NAD(+) biosynthesis; deamido-NAD(+) from nicotinate D-ribonucleotide: step 1/1. Functionally, catalyzes the reversible adenylation of nicotinate mononucleotide (NaMN) to nicotinic acid adenine dinucleotide (NaAD). This is Probable nicotinate-nucleotide adenylyltransferase from Pseudothermotoga lettingae (strain ATCC BAA-301 / DSM 14385 / NBRC 107922 / TMO) (Thermotoga lettingae).